We begin with the raw amino-acid sequence, 185 residues long: Elongation factor P (185 aa).

The protein belongs to the elongation factor P family.

It is found in the cytoplasm. Its pathway is protein biosynthesis; polypeptide chain elongation. In terms of biological role, involved in peptide bond synthesis. Stimulates efficient translation and peptide-bond synthesis on native or reconstituted 70S ribosomes in vitro. Probably functions indirectly by altering the affinity of the ribosome for aminoacyl-tRNA, thus increasing their reactivity as acceptors for peptidyl transferase. The sequence is that of Elongation factor P from Caldanaerobacter subterraneus subsp. tengcongensis (strain DSM 15242 / JCM 11007 / NBRC 100824 / MB4) (Thermoanaerobacter tengcongensis).